A 220-amino-acid chain; its full sequence is MAYRDQPLGELALSIPRASALFRKYDMDYCCGGKQTLARAAARKELDVEVIEAELAKLAEQPIEKDWRSAPLAEIIDHIIVRYHARHREQLPELILQATKVERVHADKPSVPKGLTKYLTMLHEELSSHMMKEEQILFPMIKQGMGSQAMGPISVMESEHDEAGELLEVIKHNTNNVTPPPEACTTWKAMYNGINELIDDLMDHISLENNVLFPRALAGE.

Belongs to the RIC family. YtfE subfamily. In terms of assembly, homodimer.

Its subcellular location is the cytoplasm. In terms of biological role, di-iron-containing protein involved in the repair of iron-sulfur clusters damaged by oxidative and nitrosative stress conditions. The protein is Iron-sulfur cluster repair protein YtfE of Escherichia coli O157:H7.